The following is a 337-amino-acid chain: Transcription factor bHLH121 (337 aa).

In terms of domain architecture, bHLH spans 58 to 108 (ARKSQKAGREKLRREKLNEHFVELGNVLDPERPKNDKATILTDTVQLLKEL). The tract at residues 235-337 (VHIPQNPGNR…AGGQKPDDAK (103 aa)) is disordered. Basic and acidic residues-rich tracts occupy residues 244 to 263 (RSREPRAKVSRESRSEKAED) and 280 to 291 (SDKDTLQRPEKT). A compositionally biased stretch (low complexity) spans 297–317 (NNNNNSIEESSHSSKCSSSPS).

Homodimer. Expressed constitutively in roots, leaves, stems, and flowers.

Its subcellular location is the nucleus. This Arabidopsis thaliana (Mouse-ear cress) protein is Transcription factor bHLH121 (BHLH121).